We begin with the raw amino-acid sequence, 121 residues long: Two-component response regulator ORR13 (121 aa).

Residues 5–121 form the Response regulatory domain; sequence HVLVVDDTHV…ADVPRILNYI (117 aa). Residue Asp-55 is modified to 4-aspartylphosphate.

The protein belongs to the ARR family. Type-A subfamily. Two-component system major event consists of a His-to-Asp phosphorelay between a sensor histidine kinase (HK) and a response regulator (RR). In plants, the His-to-Asp phosphorelay involves an additional intermediate named Histidine-containing phosphotransfer protein (HPt). This multistep phosphorelay consists of a His-Asp-His-Asp sequential transfer of a phosphate group between first a His and an Asp of the HK protein, followed by the transfer to a conserved His of the HPt protein and finally the transfer to an Asp in the receiver domain of the RR protein. Expressed in flowers and panicles.

In terms of biological role, functions as a response regulator involved in His-to-Asp phosphorelay signal transduction system. Phosphorylation of the Asp residue in the receiver domain activates the ability of the protein to promote the transcription of target genes. Type-A response regulators seem to act as negative regulators of the cytokinin signaling. This is Two-component response regulator ORR13 from Oryza sativa subsp. japonica (Rice).